A 462-amino-acid chain; its full sequence is Toxin CfTX-2 (462 aa).

The first 17 residues, 1–17 (MILVSLLPLLFMTGIAS), serve as a signal peptide directing secretion.

This sequence belongs to the jellyfish toxin family. Type I subfamily. In terms of assembly, oligomer. In terms of processing, contains disulfide bonds. In terms of tissue distribution, nematocytes.

It is found in the secreted. The protein localises to the nematocyst. It localises to the target cell membrane. Its function is as follows. May cause profound effects on the cardiovascular system of anesthetized rats (at 25 ug/kg), since the fraction containing this toxin and CfTX-1 produces an initial increase in mean arterial pressure, followed by cardiovascular collapse in all animals within 1 minute of injection. To note, the same fraction does not induce significant change in heart rate. Has weak hemolytic activity. Is lethal to crayfish. Causes cutaneous inflammation in humans. May act as a pore-forming toxin, disrupting normal transmembrane ion concentration gradients in susceptible cells. The polypeptide is Toxin CfTX-2 (Chironex fleckeri (Australian box jellyfish)).